A 483-amino-acid chain; its full sequence is MLPTSVSWSLYLKTFRSHLLRAPQIVLKRMSSSIDISKINSWNKEFQSDLTHQLATTVLKNYNADDALLNKTRLQKQDNRVFNTVVSTDSTPVTNQKSSGRCWLFAATNQLRLNVLSELNLKEFELSQAYLFFYDKLEKANYFLDQIVSSADQDIDSRLVQYLLAAPTEDGGQYSMFLNLVKKYGLIPKDLYGDLPYSTTASRKWNSLLTTKLREFAETLRTALKERSADDSIIVTLREQMQREIFRLMSLFMDIPPVQPNEQFTWEYVDKDKKIHTIKSTPLEFASKYAKLDPSTPVSLINDPRHPYGKLIKIDRLGNVLGGDAVIYLNVDNETLSKLVVKRLQNNKAVFFGSHTPKFMDKKTGVMDIELWNYPAIGYNLPQQKASRIRYHESLMTHAMLITGCHVDETSKLPLRYRVENSWGKDSGKDGLYVMTQKYFEEYCFQIVVDINELPKELASKFTSGKEEPIVLPIWDPMGALAK.

The N-terminal 30 residues, 1–30 (MLPTSVSWSLYLKTFRSHLLRAPQIVLKRM), are a transit peptide targeting the mitochondrion. Catalysis depends on residues cysteine 102, histidine 398, and asparagine 421. Position 483 (lysine 483) is a propeptide, removed in mature form; by autocatalysis.

Belongs to the peptidase C1 family. Homohexamer. Binds to nucleic acids. Binds single-stranded DNA and RNA with higher affinity than double-stranded DNA. The N-terminus of isoform Cytoplasmic is blocked.

Its subcellular location is the mitochondrion. The protein localises to the cytoplasm. It carries out the reaction Inactivates bleomycin B2 (a cytotoxic glycometallopeptide) by hydrolysis of a carboxyamide bond of beta-aminoalanine, but also shows general aminopeptidase activity. The specificity varies somewhat with source, but amino acid arylamides of Met, Leu and Ala are preferred.. With respect to regulation, inhibited by E64, a specific inhibitor of cysteine proteases, N-ethylmaleimide, iodacetamide, and mercury and zinc ions. Its function is as follows. The normal physiological role of the enzyme is unknown, but it is not essential for the viability of yeast cells. Has aminopeptidase activity, shortening substrate peptides sequentially by 1 amino acid. Has bleomycin hydrolase activity, which can protect the cell from the toxic effects of bleomycin. Has homocysteine-thiolactonase activity, protecting the cell against homocysteine toxicity. Acts as a repressor in the GAL4 regulatory system, but this does not require either the peptidase or nucleic acid-binding activities. The chain is Cysteine proteinase 1, mitochondrial (LAP3) from Saccharomyces cerevisiae (strain YJM789) (Baker's yeast).